The sequence spans 130 residues: Small ribosomal subunit protein uS9 (130 aa).

The protein belongs to the universal ribosomal protein uS9 family.

This is Small ribosomal subunit protein uS9 from Buchnera aphidicola subsp. Acyrthosiphon pisum (strain 5A).